Reading from the N-terminus, the 363-residue chain is MLYNLLVSHINSCYIFSIFYNVIVRSGIAILLSFSISFSLIPILIKYFKYWKNLAQPIRNLGHKSHIAKAGTPTMGGIAIIFSIIISTLMLADYKNIYVLTTIFGMLSLAILGLIDDYQKVTKKNTKGINATCKLISQIMVSIICCMIVNYNLNSEIANHLIIPFFKKLTIDLSIFYIPFALFIIIGSSNAVNLTDGLDGLVTVPIIIVSFCLGLMCYLADNAQYININHLQILHVQQASELTVLCSAIIGASLGFLWYNIQPAKIFMGDVGSLSLGGAIGIISVISKNEIRLGIIGGLFVIEALSAIIQIYSIRYLGGKRVFKMAPIHHHFEQIGWSESKIVSRFWLLSIIFSLIGLSSLIL.

Helical transmembrane passes span asparagine 4–valine 24, isoleucine 28–phenylalanine 48, threonine 72–alanine 92, asparagine 96–aspartate 116, isoleucine 129–valine 149, leucine 169–serine 189, glycine 200–alanine 220, glutamate 241–isoleucine 261, isoleucine 266–isoleucine 286, glycine 294–isoleucine 314, and isoleucine 342–isoleucine 362.

It belongs to the glycosyltransferase 4 family. MraY subfamily. Requires Mg(2+) as cofactor.

It is found in the cell inner membrane. It carries out the reaction UDP-N-acetyl-alpha-D-muramoyl-L-alanyl-gamma-D-glutamyl-meso-2,6-diaminopimeloyl-D-alanyl-D-alanine + di-trans,octa-cis-undecaprenyl phosphate = di-trans,octa-cis-undecaprenyl diphospho-N-acetyl-alpha-D-muramoyl-L-alanyl-D-glutamyl-meso-2,6-diaminopimeloyl-D-alanyl-D-alanine + UMP. The protein operates within cell wall biogenesis; peptidoglycan biosynthesis. Functionally, catalyzes the initial step of the lipid cycle reactions in the biosynthesis of the cell wall peptidoglycan: transfers peptidoglycan precursor phospho-MurNAc-pentapeptide from UDP-MurNAc-pentapeptide onto the lipid carrier undecaprenyl phosphate, yielding undecaprenyl-pyrophosphoryl-MurNAc-pentapeptide, known as lipid I. In Orientia tsutsugamushi (strain Ikeda) (Rickettsia tsutsugamushi), this protein is Phospho-N-acetylmuramoyl-pentapeptide-transferase.